Reading from the N-terminus, the 1072-residue chain is Carbamoyl phosphate synthase large chain (1072 aa).

The carboxyphosphate synthetic domain stretch occupies residues 1 to 401 (MPKYKDINKV…SLLKAVRSLE (401 aa)). R129, R169, G175, G176, K208, L210, E215, G241, V242, H243, Q284, and E298 together coordinate ATP. Residues 133-327 (KRKMQEIGEP…IAKIAAKIAI (195 aa)) form the ATP-grasp 1 domain. Mg(2+)-binding residues include Q284, E298, and N300. Positions 284, 298, and 300 each coordinate Mn(2+). The interval 402–544 (IKAYGLRLNN…YIYSTYGEED (143 aa)) is oligomerization domain. Positions 545-929 (EVEIHDMPKV…ALYKALEGAG (385 aa)) are carbamoyl phosphate synthetic domain. Residues 671–861 (SKLLRELNIN…MVKLAVEVAL (191 aa)) form the ATP-grasp 2 domain. Positions 707, 746, 748, 752, 777, 778, 779, 780, 820, and 832 each coordinate ATP. Residues Q820, E832, and N834 each contribute to the Mg(2+) site. The Mn(2+) site is built by Q820, E832, and N834. The 143-residue stretch at 930-1072 (LKIPKKGKIL…QKDNVKNLVL (143 aa)) folds into the MGS-like domain. The tract at residues 930 to 1072 (LKIPKKGKIL…QKDNVKNLVL (143 aa)) is allosteric domain.

It belongs to the CarB family. In terms of assembly, composed of two chains; the small (or glutamine) chain promotes the hydrolysis of glutamine to ammonia, which is used by the large (or ammonia) chain to synthesize carbamoyl phosphate. Tetramer of heterodimers (alpha,beta)4. Mg(2+) serves as cofactor. The cofactor is Mn(2+).

It catalyses the reaction hydrogencarbonate + L-glutamine + 2 ATP + H2O = carbamoyl phosphate + L-glutamate + 2 ADP + phosphate + 2 H(+). It carries out the reaction hydrogencarbonate + NH4(+) + 2 ATP = carbamoyl phosphate + 2 ADP + phosphate + 2 H(+). The protein operates within amino-acid biosynthesis; L-arginine biosynthesis; carbamoyl phosphate from bicarbonate: step 1/1. It functions in the pathway pyrimidine metabolism; UMP biosynthesis via de novo pathway; (S)-dihydroorotate from bicarbonate: step 1/3. Its function is as follows. Large subunit of the glutamine-dependent carbamoyl phosphate synthetase (CPSase). CPSase catalyzes the formation of carbamoyl phosphate from the ammonia moiety of glutamine, carbonate, and phosphate donated by ATP, constituting the first step of 2 biosynthetic pathways, one leading to arginine and/or urea and the other to pyrimidine nucleotides. The large subunit (synthetase) binds the substrates ammonia (free or transferred from glutamine from the small subunit), hydrogencarbonate and ATP and carries out an ATP-coupled ligase reaction, activating hydrogencarbonate by forming carboxy phosphate which reacts with ammonia to form carbamoyl phosphate. In Thermoanaerobacter pseudethanolicus (strain ATCC 33223 / 39E) (Clostridium thermohydrosulfuricum), this protein is Carbamoyl phosphate synthase large chain.